The sequence spans 61 residues: Large ribosomal subunit protein uL30 (61 aa).

The protein belongs to the universal ribosomal protein uL30 family. As to quaternary structure, part of the 50S ribosomal subunit.

This is Large ribosomal subunit protein uL30 from Lacticaseibacillus casei (strain BL23) (Lactobacillus casei).